Here is a 465-residue protein sequence, read N- to C-terminus: MSRLLQTPFLPSVSLPTKTRSSVTGFRVKPRIIPIQAKIREIFMPALSSTMTEGKIVSWVKSEGDKLNKGESVVVVESDKADMDVETFYDGYLAAIMVEEGGVAPVGSAIALLAETEDEIADAKAKASGGGGGGDSKAPPASPPTAAVEAPVSVEKKVAAAPVSIKAVAASAVHPASEGGKRIVASPYAKKLAKELKVELAGLVGSGPMGRIVAKDVEAVAAGGGVQAAVAVKEVVAAPGVELGSVVPFTTMQGAVSRNMVESLGVPTFRVGYTISTDALDALYKKIKSKGVTMTALLAKATALALAKHPVVNSSCRDGNSFVYNSSINVAVAVAIDGGLITPVLQNADKVDIYSLSRKWKELVDKARAKQLQPQEYNTGTFTLSNLGMFGVDRFDAILPPGTGAIMAVGASQPSVVATKDGRIGMKNQMQVNVTADHRVIYGADLAQFLQTLASIIEDPKDLTF.

Residues 1–31 (MSRLLQTPFLPSVSLPTKTRSSVTGFRVKPR) constitute a chloroplast transit peptide. The region spanning 39–114 (IREIFMPALS…PVGSAIALLA (76 aa)) is the Lipoyl-binding domain. Position 80 is an N6-lipoyllysine (Lys-80). The interval 123–148 (AKAKASGGGGGGDSKAPPASPPTAAV) is disordered. Low complexity predominate over residues 136–148 (SKAPPASPPTAAV). In terms of domain architecture, Peripheral subunit-binding (PSBD) spans 184-221 (VASPYAKKLAKELKVELAGLVGSGPMGRIVAKDVEAVA). Residue His-438 is part of the active site.

It belongs to the 2-oxoacid dehydrogenase family. (R)-lipoate is required as a cofactor.

Its subcellular location is the plastid. It is found in the chloroplast stroma. It catalyses the reaction N(6)-[(R)-dihydrolipoyl]-L-lysyl-[protein] + acetyl-CoA = N(6)-[(R)-S(8)-acetyldihydrolipoyl]-L-lysyl-[protein] + CoA. Functionally, the pyruvate dehydrogenase complex catalyzes the overall conversion of pyruvate to acetyl-CoA and CO(2). It contains multiple copies of three enzymatic components: pyruvate dehydrogenase (E1), dihydrolipoamide acetyltransferase (E2) and lipoamide dehydrogenase (E3). The protein is Dihydrolipoyllysine-residue acetyltransferase component 5 of pyruvate dehydrogenase complex, chloroplastic (EMB3003) of Arabidopsis thaliana (Mouse-ear cress).